A 596-amino-acid chain; its full sequence is Elongation factor 4 (596 aa).

Residues 2 to 183 (KNIRNFSIIA…AIVRRVPAPD (182 aa)) form the tr-type G domain. Residues 14 to 19 (DHGKST) and 130 to 133 (NKID) contribute to the GTP site.

It belongs to the TRAFAC class translation factor GTPase superfamily. Classic translation factor GTPase family. LepA subfamily.

It is found in the cell inner membrane. It carries out the reaction GTP + H2O = GDP + phosphate + H(+). Required for accurate and efficient protein synthesis under certain stress conditions. May act as a fidelity factor of the translation reaction, by catalyzing a one-codon backward translocation of tRNAs on improperly translocated ribosomes. Back-translocation proceeds from a post-translocation (POST) complex to a pre-translocation (PRE) complex, thus giving elongation factor G a second chance to translocate the tRNAs correctly. Binds to ribosomes in a GTP-dependent manner. This is Elongation factor 4 from Campylobacter curvus (strain 525.92).